Here is a 123-residue protein sequence, read N- to C-terminus: Large ribosomal subunit protein uL14 (123 aa).

The protein belongs to the universal ribosomal protein uL14 family. In terms of assembly, part of the 50S ribosomal subunit. Forms a cluster with proteins L3 and L19. In the 70S ribosome, L14 and L19 interact and together make contacts with the 16S rRNA in bridges B5 and B8.

Binds to 23S rRNA. Forms part of two intersubunit bridges in the 70S ribosome. The sequence is that of Large ribosomal subunit protein uL14 from Hamiltonella defensa subsp. Acyrthosiphon pisum (strain 5AT).